We begin with the raw amino-acid sequence, 221 residues long: Flagellar L-ring protein 1 (221 aa).

The signal sequence occupies residues 1 to 16 (MKRFLILTPMVLALCG). The N-palmitoyl cysteine moiety is linked to residue Cys-17. A lipid anchor (S-diacylglycerol cysteine) is attached at Cys-17.

It belongs to the FlgH family. The basal body constitutes a major portion of the flagellar organelle and consists of four rings (L,P,S, and M) mounted on a central rod.

It localises to the cell outer membrane. The protein localises to the bacterial flagellum basal body. Assembles around the rod to form the L-ring and probably protects the motor/basal body from shearing forces during rotation. The chain is Flagellar L-ring protein 1 from Yersinia pestis.